The chain runs to 117 residues: Large ribosomal subunit protein uL18 (117 aa).

This sequence belongs to the universal ribosomal protein uL18 family. As to quaternary structure, part of the 50S ribosomal subunit; part of the 5S rRNA/L5/L18/L25 subcomplex. Contacts the 5S and 23S rRNAs.

Its function is as follows. This is one of the proteins that bind and probably mediate the attachment of the 5S RNA into the large ribosomal subunit, where it forms part of the central protuberance. In Serratia proteamaculans (strain 568), this protein is Large ribosomal subunit protein uL18.